The following is a 1219-amino-acid chain: A disintegrin and metalloproteinase with thrombospondin motifs 18 (1219 aa).

The N-terminal stretch at 1–47 is a signal peptide; the sequence is MECALLCLCALRAAGPGPPWGPAGLGRLAKALQLCCFCCASVAVALA. Positions 48-284 are excised as a propeptide; the sequence is SDSGSSGGSG…EYGGTGRPRR (237 aa). Asn151 and Asn190 each carry an N-linked (GlcNAc...) asparagine glycan. The segment at 217 to 248 is disordered; sequence YPGSQRTYPGHSPSHTPPASQSQEPEYSHRRW. Residues 218 to 241 are compositionally biased toward polar residues; that stretch reads PGSQRTYPGHSPSHTPPASQSQEP. One can recognise a Peptidase M12B domain in the interval 293–498; the sequence is LNVETLVVAD…PQAGCLVDEP (206 aa). Disulfide bonds link Cys369/Cys420, Cys395/Cys402, Cys414/Cys493, Cys453/Cys477, Cys521/Cys546, Cys532/Cys553, Cys541/Cys572, Cys566/Cys577, Cys601/Cys638, Cys605/Cys643, and Cys616/Cys628. Position 436 (His436) interacts with Zn(2+). Residue Glu437 is part of the active site. Positions 440 and 446 each coordinate Zn(2+). The 56-residue stretch at 589–644 folds into the TSP type-1 1 domain; the sequence is HGQWSAWSKWSECSRTCGGGVKFQERHCSNPKPQYGGKYCPGSSRIYKLCNINPCP. N-linked (GlcNAc...) asparagine glycosylation is found at Asn745, Asn838, Asn865, and Asn909. 4 TSP type-1 domains span residues 931–990, 991–1049, 1052–1116, and 1121–1176; these read CPAY…NSHA, CPPE…GRCP, NRLQ…RTCP, and AVAS…NFCP. Residues 1182 to 1219 enclose the PLAC domain; that stretch reads DDPSCVDFFSWCHLVPQHGVCNHKFYGKQCCRSCTRKS.

The cofactor is Zn(2+). In terms of processing, the precursor is cleaved by a furin endopeptidase. Glycosylated. Can be O-fucosylated by POFUT2 on a serine or a threonine residue found within the consensus sequence C1-X(2)-(S/T)-C2-G of the TSP type-1 repeat domains where C1 and C2 are the first and second cysteine residue of the repeat, respectively. Fucosylated repeats can then be further glycosylated by the addition of a beta-1,3-glucose residue by the glucosyltransferase, B3GALTL. Fucosylation mediates the efficient secretion of ADAMTS family members. Can also be C-glycosylated with one or two mannose molecules on tryptophan residues within the consensus sequence W-X-X-W of the TPRs, and N-glycosylated. These other glycosylations can also facilitate secretion.

The protein resides in the secreted. Its subcellular location is the extracellular space. It is found in the extracellular matrix. The sequence is that of A disintegrin and metalloproteinase with thrombospondin motifs 18 (Adamts18) from Mus musculus (Mouse).